A 155-amino-acid polypeptide reads, in one-letter code: Endoribonuclease YbeY (155 aa).

Zn(2+) contacts are provided by histidine 114, histidine 118, and histidine 124.

This sequence belongs to the endoribonuclease YbeY family. It depends on Zn(2+) as a cofactor.

The protein resides in the cytoplasm. In terms of biological role, single strand-specific metallo-endoribonuclease involved in late-stage 70S ribosome quality control and in maturation of the 3' terminus of the 16S rRNA. The polypeptide is Endoribonuclease YbeY (Buchnera aphidicola subsp. Acyrthosiphon pisum (strain APS) (Acyrthosiphon pisum symbiotic bacterium)).